The sequence spans 67 residues: Medusin-PT (67 aa).

Positions 1–22 are cleaved as a signal peptide; it reads MAFLKKSLFLVFFLGFVSLSIC. A propeptide spanning residues 23–48 is cleaved from the precursor; it reads EEEKRETDEKENEQEDDREERSEEKR. The disordered stretch occupies residues 25–46; the sequence is EKRETDEKENEQEDDREERSEE. Acidic residues predominate over residues 31-40; that stretch reads EKENEQEDDR. Leu-66 carries the post-translational modification Leucine amide.

The protein belongs to the frog skin active peptide (FSAP) family. Medusin subfamily. In terms of processing, in the synthetic mutant medusin-PT1a [T58K], the Leu-50 has been modified in a D-amino acid. In medusin-PT1a, there is an increase in antimicrobial activity, and an increase in hemolytic activity. It is more potent against S.aureus and gains activity against MRSA, E.faecalis, E.coli, P.aeruginosa and C.albicans. There is an important increase in both biofilm inhibition and biofilm eradication. In terms of tissue distribution, expressed by the skin glands.

The protein resides in the secreted. It localises to the target cell membrane. In terms of biological role, antimicrobial peptide with activity against Gram-positive bacteria S.epidermidis ATCC 12228 (MIC=50 uM) and S.aureus (MIC=64 ug/ml and MBC=128 ug/ml). Not active against some Gram-positive bacteria (methicillin-resistant S.aureus (MRSA), E.faecalis), Gram-negative bacterium E.coli ATCC 25922 and fungus C.albicans at concentrations up to 100 uM. Can only slightly inhibit the formation of biofilm by S.aureus (minimal biofilm inhibitionconcentration MBIC=512 ug/ml, minimal biofilm eradication concentration MBEC&gt;512 ug/ml). Has an anti-inflammatory effect, since it inhibits the production of the pro-inflammatory cytokines TNF-alpha and IL-1beta. Has high activity of stimulation of insulin release, which may protect the species from being eaten by predators by causing fatal hypoglycemia. Is not cytotoxic to cancer line cells. Shows very low hemolysis on horse erythrocytes and moderate hemolysis on mouse erythrocytes. The chain is Medusin-PT from Phyllomedusa tarsius (Brownbelly leaf frog).